A 213-amino-acid chain; its full sequence is Large ribosomal subunit protein uL3 (213 aa).

At Gln151 the chain carries N5-methylglutamine.

It belongs to the universal ribosomal protein uL3 family. Part of the 50S ribosomal subunit. Forms a cluster with proteins L14 and L19. Methylated by PrmB.

In terms of biological role, one of the primary rRNA binding proteins, it binds directly near the 3'-end of the 23S rRNA, where it nucleates assembly of the 50S subunit. This chain is Large ribosomal subunit protein uL3, found in Allorhizobium ampelinum (strain ATCC BAA-846 / DSM 112012 / S4) (Agrobacterium vitis (strain S4)).